The following is a 599-amino-acid chain: Beta-myrcene synthase, chloroplastic (599 aa).

The N-terminal 34 residues, 1–34 (MWSTISISMNVAILKKPLNFLHNSNNKASNPRCV), are a transit peptide targeting the chloroplast. Mg(2+)-binding residues include D352, D356, D496, T500, and E504. A DDXXD motif motif is present at residues 352–356 (DDVYD).

It belongs to the terpene synthase family. Mg(2+) serves as cofactor. Requires Mn(2+) as cofactor.

Its subcellular location is the plastid. The protein localises to the chloroplast. The enzyme catalyses (2E)-geranyl diphosphate = beta-myrcene + diphosphate. It functions in the pathway secondary metabolite biosynthesis; terpenoid biosynthesis. In terms of biological role, monoterpene synthase that catalyzes the formation of beta-myrcene from geranyl diphosphate. This is Beta-myrcene synthase, chloroplastic (MYS) from Ocimum basilicum (Sweet basil).